A 302-amino-acid chain; its full sequence is Protein FdhE homolog (302 aa).

This sequence belongs to the FdhE family.

Its subcellular location is the cytoplasm. Its function is as follows. Necessary for formate dehydrogenase activity. The polypeptide is Protein FdhE homolog (Shewanella sp. (strain MR-4)).